Here is a 246-residue protein sequence, read N- to C-terminus: MyoD family inhibitor (246 aa).

Disordered stretches follow at residues 1–76 (MYQV…LDST) and 91–151 (GNPL…SKST). Positions 14–26 (APYGAPSAAPGPA) are enriched in low complexity. One can recognise an MDFI domain in the interval 99–246 (LLPNDSGHPS…MECCGLCFSS (148 aa)).

Belongs to the MDFI family. In terms of assembly, interacts (via C-terminus) with AXIN1 and LEF1. Interacts with CCNT2. Interacts (via C-terminus) with Piezo channel composed of PIEZO1 or PIEZO2; the interaction prolongs Piezo channel inactivation.

It localises to the nucleus. The protein localises to the cytoplasm. Its function is as follows. Inhibits the transactivation activity of the Myod family of myogenic factors and represses myogenesis. Acts by associating with Myod family members and retaining them in the cytoplasm by masking their nuclear localization signals. Can also interfere with the DNA-binding activity of Myod family members. Plays an important role in trophoblast and chondrogenic differentiation. Regulates the transcriptional activity of TCF7L1/TCF3 by interacting directly with TCF7L1/TCF3 and preventing it from binding DNA. Binds to the axin complex, resulting in an increase in the level of free beta-catenin. Affects axin regulation of the WNT and JNK signaling pathways. Regulates the activity of mechanosensitive Piezo channel. This chain is MyoD family inhibitor (MDFI), found in Homo sapiens (Human).